The following is a 361-amino-acid chain: D-alanine--D-alanine ligase (361 aa).

The ATP-grasp domain maps to 140–345 (KHLFAQAGLD…YAELIEKLVA (206 aa)). 173–228 (EGELGYPCFVKPANLGSSVGISKCRSREELDQAFELAFQYDRKIVVEEGVIGREIE) contributes to the ATP binding site. Residues Asp299, Glu312, and Asn314 each contribute to the Mg(2+) site.

This sequence belongs to the D-alanine--D-alanine ligase family. It depends on Mg(2+) as a cofactor. Mn(2+) serves as cofactor.

The protein localises to the cytoplasm. The catalysed reaction is 2 D-alanine + ATP = D-alanyl-D-alanine + ADP + phosphate + H(+). It participates in cell wall biogenesis; peptidoglycan biosynthesis. Functionally, cell wall formation. The chain is D-alanine--D-alanine ligase from Bacillus licheniformis (strain ATCC 14580 / DSM 13 / JCM 2505 / CCUG 7422 / NBRC 12200 / NCIMB 9375 / NCTC 10341 / NRRL NRS-1264 / Gibson 46).